Here is a 1396-residue protein sequence, read N- to C-terminus: DNA-directed RNA polymerase subunit beta' (1396 aa).

Cys-70, Cys-72, Cys-85, and Cys-88 together coordinate Zn(2+). Mg(2+) is bound by residues Asp-460, Asp-462, and Asp-464. Residues Cys-814, Cys-888, Cys-895, and Cys-898 each coordinate Zn(2+).

It belongs to the RNA polymerase beta' chain family. In terms of assembly, the RNAP catalytic core consists of 2 alpha, 1 beta, 1 beta' and 1 omega subunit. When a sigma factor is associated with the core the holoenzyme is formed, which can initiate transcription. Requires Mg(2+) as cofactor. It depends on Zn(2+) as a cofactor.

The enzyme catalyses RNA(n) + a ribonucleoside 5'-triphosphate = RNA(n+1) + diphosphate. Its function is as follows. DNA-dependent RNA polymerase catalyzes the transcription of DNA into RNA using the four ribonucleoside triphosphates as substrates. The protein is DNA-directed RNA polymerase subunit beta' of Chromobacterium violaceum (strain ATCC 12472 / DSM 30191 / JCM 1249 / CCUG 213 / NBRC 12614 / NCIMB 9131 / NCTC 9757 / MK).